The primary structure comprises 275 residues: Dermonecrotic toxin SpeSicTox-betaIIA2i (275 aa).

Residue His5 is part of the active site. Mg(2+)-binding residues include Glu25 and Asp27. His41 functions as the Nucleophile in the catalytic mechanism. 2 disulfides stabilise this stretch: Cys45-Cys51 and Cys47-Cys190. Residue Asp85 coordinates Mg(2+).

This sequence belongs to the arthropod phospholipase D family. Class II subfamily. Requires Mg(2+) as cofactor. In terms of tissue distribution, expressed by the venom gland.

It localises to the secreted. It carries out the reaction an N-(acyl)-sphingosylphosphocholine = an N-(acyl)-sphingosyl-1,3-cyclic phosphate + choline. The enzyme catalyses an N-(acyl)-sphingosylphosphoethanolamine = an N-(acyl)-sphingosyl-1,3-cyclic phosphate + ethanolamine. It catalyses the reaction a 1-acyl-sn-glycero-3-phosphocholine = a 1-acyl-sn-glycero-2,3-cyclic phosphate + choline. The catalysed reaction is a 1-acyl-sn-glycero-3-phosphoethanolamine = a 1-acyl-sn-glycero-2,3-cyclic phosphate + ethanolamine. Its function is as follows. Dermonecrotic toxins cleave the phosphodiester linkage between the phosphate and headgroup of certain phospholipids (sphingolipid and lysolipid substrates), forming an alcohol (often choline) and a cyclic phosphate. This toxin acts on sphingomyelin (SM). It may also act on ceramide phosphoethanolamine (CPE), lysophosphatidylcholine (LPC) and lysophosphatidylethanolamine (LPE), but not on lysophosphatidylserine (LPS), and lysophosphatidylglycerol (LPG). It acts by transphosphatidylation, releasing exclusively cyclic phosphate products as second products. Induces dermonecrosis, hemolysis, increased vascular permeability, edema, inflammatory response, and platelet aggregation. In Sicarius peruensis (Six-eyed sand spider), this protein is Dermonecrotic toxin SpeSicTox-betaIIA2i.